We begin with the raw amino-acid sequence, 495 residues long: Probable histidine ammonia-lyase (495 aa).

A cross-link (5-imidazolinone (Ala-Gly)) is located at residues 141–143 (ASG). S142 is subject to 2,3-didehydroalanine (Ser).

The protein belongs to the PAL/histidase family. Post-translationally, contains an active site 4-methylidene-imidazol-5-one (MIO), which is formed autocatalytically by cyclization and dehydration of residues Ala-Ser-Gly.

The protein resides in the cytoplasm. The catalysed reaction is L-histidine = trans-urocanate + NH4(+). Its pathway is amino-acid degradation; L-histidine degradation into L-glutamate; N-formimidoyl-L-glutamate from L-histidine: step 1/3. The sequence is that of Probable histidine ammonia-lyase from Thermoplasma volcanium (strain ATCC 51530 / DSM 4299 / JCM 9571 / NBRC 15438 / GSS1).